We begin with the raw amino-acid sequence, 117 residues long: Immunoglobulin heavy variable 1-69 (117 aa).

The first 19 residues, 1 to 19, serve as a signal peptide directing secretion; that stretch reads MDWTWRFLFVVAAATGVQS. Residue Q20 is modified to Pyrrolidone carboxylic acid. Residues 20–44 form a framework-1 region; it reads QVQLVQSGAEVKKPGSSVKVSCKAS. One can recognise an Ig-like domain in the interval 20 to 117; that stretch reads QVQLVQSGAE…EDTAVYYCAR (98 aa). Cysteines 41 and 115 form a disulfide. The interval 45-52 is complementarity-determining-1; sequence GGTFSSYA. Residues 53–69 form a framework-2 region; it reads ISWVRQAPGQGLEWMGG. Residues 70–77 form a complementarity-determining-2 region; it reads IIPIFGTA. Positions 78-115 are framework-3; that stretch reads NYAQKFQGRVTITADKSTSTAYMELSSLRSEDTAVYYC. A complementarity-determining-3 region spans residues 116-117; sequence AR.

Immunoglobulins are composed of two identical heavy chains and two identical light chains; disulfide-linked.

It is found in the secreted. Its subcellular location is the cell membrane. V region of the variable domain of immunoglobulin heavy chains that participates in the antigen recognition. Immunoglobulins, also known as antibodies, are membrane-bound or secreted glycoproteins produced by B lymphocytes. In the recognition phase of humoral immunity, the membrane-bound immunoglobulins serve as receptors which, upon binding of a specific antigen, trigger the clonal expansion and differentiation of B lymphocytes into immunoglobulins-secreting plasma cells. Secreted immunoglobulins mediate the effector phase of humoral immunity, which results in the elimination of bound antigens. The antigen binding site is formed by the variable domain of one heavy chain, together with that of its associated light chain. Thus, each immunoglobulin has two antigen binding sites with remarkable affinity for a particular antigen. The variable domains are assembled by a process called V-(D)-J rearrangement and can then be subjected to somatic hypermutations which, after exposure to antigen and selection, allow affinity maturation for a particular antigen. In Homo sapiens (Human), this protein is Immunoglobulin heavy variable 1-69.